Here is a 571-residue protein sequence, read N- to C-terminus: Acetolactate synthase large subunit (571 aa).

Glu51 provides a ligand contact to thiamine diphosphate. Residues Arg153, 261–282 (HGTY…IGVR), and 304–323 (DIDP…IVGD) contribute to the FAD site. Residues 394–474 (QHQMFTALYY…VLILNLNNSS (81 aa)) form a thiamine pyrophosphate binding region. Mg(2+) contacts are provided by Asp445 and Asn472.

This sequence belongs to the TPP enzyme family. In terms of assembly, dimer of large and small chains. Mg(2+) serves as cofactor. It depends on thiamine diphosphate as a cofactor.

It catalyses the reaction 2 pyruvate + H(+) = (2S)-2-acetolactate + CO2. It functions in the pathway amino-acid biosynthesis; L-isoleucine biosynthesis; L-isoleucine from 2-oxobutanoate: step 1/4. It participates in amino-acid biosynthesis; L-valine biosynthesis; L-valine from pyruvate: step 1/4. This is Acetolactate synthase large subunit (ilvI) from Buchnera aphidicola subsp. Schizaphis graminum (strain Sg).